The sequence spans 239 residues: LexA repressor (239 aa).

A DNA-binding region (H-T-H motif) is located at residues 26-46 (FDEMKDALDLASKSGIHRLIT). Catalysis depends on for autocatalytic cleavage activity residues S159 and K197.

This sequence belongs to the peptidase S24 family. In terms of assembly, homodimer.

It carries out the reaction Hydrolysis of Ala-|-Gly bond in repressor LexA.. In terms of biological role, represses a number of genes involved in the response to DNA damage (SOS response), including recA and lexA. In the presence of single-stranded DNA, RecA interacts with LexA causing an autocatalytic cleavage which disrupts the DNA-binding part of LexA, leading to derepression of the SOS regulon and eventually DNA repair. In Rhizobium etli (strain ATCC 51251 / DSM 11541 / JCM 21823 / NBRC 15573 / CFN 42), this protein is LexA repressor.